The sequence spans 218 residues: NAD(P)H-quinone oxidoreductase subunit I (218 aa).

2 consecutive 4Fe-4S ferredoxin-type domains span residues Gly55–Val84 and Arg95–Glu124. [4Fe-4S] cluster contacts are provided by Cys64, Cys67, Cys70, Cys74, Cys104, Cys107, Cys110, and Cys114. Positions Glu168–Glu218 are disordered. The span at Thr208–Glu218 shows a compositional bias: polar residues.

It belongs to the complex I 23 kDa subunit family. As to quaternary structure, NDH-1 is composed of at least 11 different subunits. Requires [4Fe-4S] cluster as cofactor.

It is found in the cellular thylakoid membrane. It catalyses the reaction a plastoquinone + NADH + (n+1) H(+)(in) = a plastoquinol + NAD(+) + n H(+)(out). It carries out the reaction a plastoquinone + NADPH + (n+1) H(+)(in) = a plastoquinol + NADP(+) + n H(+)(out). In terms of biological role, NDH-1 shuttles electrons from an unknown electron donor, via FMN and iron-sulfur (Fe-S) centers, to quinones in the respiratory and/or the photosynthetic chain. The immediate electron acceptor for the enzyme in this species is believed to be plastoquinone. Couples the redox reaction to proton translocation, and thus conserves the redox energy in a proton gradient. The chain is NAD(P)H-quinone oxidoreductase subunit I from Synechococcus sp. (strain WH7803).